The sequence spans 274 residues: Glutamate racemase (274 aa).

Substrate is bound by residues 9–10 (DS) and 41–42 (YG). The active-site Proton donor/acceptor is C73. 74–75 (NT) serves as a coordination point for substrate. C183 functions as the Proton donor/acceptor in the catalytic mechanism. 184-185 (TH) is a substrate binding site.

It belongs to the aspartate/glutamate racemases family.

The catalysed reaction is L-glutamate = D-glutamate. It functions in the pathway cell wall biogenesis; peptidoglycan biosynthesis. Functionally, provides the (R)-glutamate required for cell wall biosynthesis. The protein is Glutamate racemase of Shewanella baltica (strain OS223).